The primary structure comprises 546 residues: Phosphomethylpyrimidine synthase (546 aa).

Substrate is bound by residues N145, M174, Y203, H239, 259 to 261, 300 to 303, and E339; these read SRG and DGLR. H343 contacts Zn(2+). Y366 serves as a coordination point for substrate. Residue H407 participates in Zn(2+) binding. C487, C490, and C495 together coordinate [4Fe-4S] cluster.

This sequence belongs to the ThiC family. [4Fe-4S] cluster serves as cofactor.

The catalysed reaction is 5-amino-1-(5-phospho-beta-D-ribosyl)imidazole + S-adenosyl-L-methionine = 4-amino-2-methyl-5-(phosphooxymethyl)pyrimidine + CO + 5'-deoxyadenosine + formate + L-methionine + 3 H(+). The protein operates within cofactor biosynthesis; thiamine diphosphate biosynthesis. Its function is as follows. Catalyzes the synthesis of the hydroxymethylpyrimidine phosphate (HMP-P) moiety of thiamine from aminoimidazole ribotide (AIR) in a radical S-adenosyl-L-methionine (SAM)-dependent reaction. The chain is Phosphomethylpyrimidine synthase from Mycobacterium marinum (strain ATCC BAA-535 / M).